Here is a 350-residue protein sequence, read N- to C-terminus: 4-hydroxy-3-methylbut-2-enyl diphosphate reductase (350 aa).

Position 19 (cysteine 19) interacts with [4Fe-4S] cluster. (2E)-4-hydroxy-3-methylbut-2-enyl diphosphate is bound by residues histidine 48 and histidine 84. 2 residues coordinate dimethylallyl diphosphate: histidine 48 and histidine 84. Isopentenyl diphosphate is bound by residues histidine 48 and histidine 84. Residue cysteine 106 participates in [4Fe-4S] cluster binding. Histidine 134 contributes to the (2E)-4-hydroxy-3-methylbut-2-enyl diphosphate binding site. Histidine 134 serves as a coordination point for dimethylallyl diphosphate. Residue histidine 134 coordinates isopentenyl diphosphate. Glutamate 136 acts as the Proton donor in catalysis. Residue threonine 175 participates in (2E)-4-hydroxy-3-methylbut-2-enyl diphosphate binding. Cysteine 205 contacts [4Fe-4S] cluster. Residues serine 233, serine 234, asparagine 235, and serine 278 each contribute to the (2E)-4-hydroxy-3-methylbut-2-enyl diphosphate site. Dimethylallyl diphosphate contacts are provided by serine 233, serine 234, asparagine 235, and serine 278. Residues serine 233, serine 234, asparagine 235, and serine 278 each coordinate isopentenyl diphosphate.

The protein belongs to the IspH family. Requires [4Fe-4S] cluster as cofactor.

The catalysed reaction is isopentenyl diphosphate + 2 oxidized [2Fe-2S]-[ferredoxin] + H2O = (2E)-4-hydroxy-3-methylbut-2-enyl diphosphate + 2 reduced [2Fe-2S]-[ferredoxin] + 2 H(+). It carries out the reaction dimethylallyl diphosphate + 2 oxidized [2Fe-2S]-[ferredoxin] + H2O = (2E)-4-hydroxy-3-methylbut-2-enyl diphosphate + 2 reduced [2Fe-2S]-[ferredoxin] + 2 H(+). It functions in the pathway isoprenoid biosynthesis; dimethylallyl diphosphate biosynthesis; dimethylallyl diphosphate from (2E)-4-hydroxy-3-methylbutenyl diphosphate: step 1/1. It participates in isoprenoid biosynthesis; isopentenyl diphosphate biosynthesis via DXP pathway; isopentenyl diphosphate from 1-deoxy-D-xylulose 5-phosphate: step 6/6. Catalyzes the conversion of 1-hydroxy-2-methyl-2-(E)-butenyl 4-diphosphate (HMBPP) into a mixture of isopentenyl diphosphate (IPP) and dimethylallyl diphosphate (DMAPP). Acts in the terminal step of the DOXP/MEP pathway for isoprenoid precursor biosynthesis. In Brucella anthropi (strain ATCC 49188 / DSM 6882 / CCUG 24695 / JCM 21032 / LMG 3331 / NBRC 15819 / NCTC 12168 / Alc 37) (Ochrobactrum anthropi), this protein is 4-hydroxy-3-methylbut-2-enyl diphosphate reductase.